Reading from the N-terminus, the 453-residue chain is Aspartate aminotransferase, chloroplastic (453 aa).

Residues 1 to 44 (MASLMLSLGSTSLLPREINKDKLKLGTSASNPFLKAKSFSRVTM) constitute a chloroplast transit peptide. 3 residues coordinate L-aspartate: Gly-85, Trp-181, and Asn-234. Residue Lys-298 is modified to N6-(pyridoxal phosphate)lysine. Arg-427 is an L-aspartate binding site.

The protein belongs to the class-I pyridoxal-phosphate-dependent aminotransferase family. As to quaternary structure, homodimer. It depends on pyridoxal 5'-phosphate as a cofactor.

Its subcellular location is the plastid. The protein resides in the chloroplast. It is found in the amyloplast. It catalyses the reaction L-aspartate + 2-oxoglutarate = oxaloacetate + L-glutamate. Its function is as follows. Amino acid aminotransferase important for the metabolism of amino acids and Krebs-cycle related organic acids. No activity with D-Asp or D-Ala as amino donors. In plants, it is involved in nitrogen metabolism and in aspects of carbon and energy metabolism. The polypeptide is Aspartate aminotransferase, chloroplastic (ASP5) (Arabidopsis thaliana (Mouse-ear cress)).